We begin with the raw amino-acid sequence, 336 residues long: Aspartate carbamoyltransferase catalytic subunit (336 aa).

Carbamoyl phosphate is bound by residues arginine 72 and threonine 73. Lysine 100 is a binding site for L-aspartate. Residues arginine 122, histidine 155, and glutamine 158 each coordinate carbamoyl phosphate. 2 residues coordinate L-aspartate: arginine 188 and arginine 242. Residues glycine 288 and proline 289 each coordinate carbamoyl phosphate.

This sequence belongs to the aspartate/ornithine carbamoyltransferase superfamily. ATCase family. Heterododecamer (2C3:3R2) of six catalytic PyrB chains organized as two trimers (C3), and six regulatory PyrI chains organized as three dimers (R2).

The catalysed reaction is carbamoyl phosphate + L-aspartate = N-carbamoyl-L-aspartate + phosphate + H(+). It participates in pyrimidine metabolism; UMP biosynthesis via de novo pathway; (S)-dihydroorotate from bicarbonate: step 2/3. In terms of biological role, catalyzes the condensation of carbamoyl phosphate and aspartate to form carbamoyl aspartate and inorganic phosphate, the committed step in the de novo pyrimidine nucleotide biosynthesis pathway. This is Aspartate carbamoyltransferase catalytic subunit from Lactobacillus leichmannii.